The primary structure comprises 135 residues: Ribonuclease P protein component (135 aa).

It belongs to the RnpA family. In terms of assembly, consists of a catalytic RNA component (M1 or rnpB) and a protein subunit.

It catalyses the reaction Endonucleolytic cleavage of RNA, removing 5'-extranucleotides from tRNA precursor.. Functionally, RNaseP catalyzes the removal of the 5'-leader sequence from pre-tRNA to produce the mature 5'-terminus. It can also cleave other RNA substrates such as 4.5S RNA. The protein component plays an auxiliary but essential role in vivo by binding to the 5'-leader sequence and broadening the substrate specificity of the ribozyme. In Xylella fastidiosa (strain 9a5c), this protein is Ribonuclease P protein component.